The sequence spans 682 residues: Beta-galactosidase (682 aa).

An N-terminal signal peptide occupies residues 1-23 (MPGFLVRILPLLLPLLLLGPTRG). Positions 24–28 (LRNAT) are excised as a propeptide. An N-linked (GlcNAc...) asparagine glycan is attached at N26. Substrate-binding residues include Y83, E129, and N187. The active-site Proton donor is E188. The cysteines at positions 195 and 230 are disulfide-linked. N-linked (GlcNAc...) asparagine glycosylation is present at N247. Residue E268 is the Nucleophile of the active site. Y333 provides a ligand contact to substrate. Residues N464, N498, N545, and N555 are each glycosylated (N-linked (GlcNAc...) asparagine). C626 and C634 form a disulfide bridge.

The protein belongs to the glycosyl hydrolase 35 family. In terms of assembly, homodimer. May form higher multimers.

Its subcellular location is the lysosome. The catalysed reaction is Hydrolysis of terminal non-reducing beta-D-galactose residues in beta-D-galactosides.. Functionally, cleaves beta-linked terminal galactosyl residues from gangliosides, glycoproteins, and glycosaminoglycans. In Macaca fascicularis (Crab-eating macaque), this protein is Beta-galactosidase (GLB1).